Consider the following 150-residue polypeptide: D-aminoacyl-tRNA deacylase (150 aa).

Positions 138 to 139 (GP) match the Gly-cisPro motif, important for rejection of L-amino acids motif.

Belongs to the DTD family. Homodimer.

It is found in the cytoplasm. It catalyses the reaction glycyl-tRNA(Ala) + H2O = tRNA(Ala) + glycine + H(+). The enzyme catalyses a D-aminoacyl-tRNA + H2O = a tRNA + a D-alpha-amino acid + H(+). Functionally, an aminoacyl-tRNA editing enzyme that deacylates mischarged D-aminoacyl-tRNAs. Also deacylates mischarged glycyl-tRNA(Ala), protecting cells against glycine mischarging by AlaRS. Acts via tRNA-based rather than protein-based catalysis; rejects L-amino acids rather than detecting D-amino acids in the active site. By recycling D-aminoacyl-tRNA to D-amino acids and free tRNA molecules, this enzyme counteracts the toxicity associated with the formation of D-aminoacyl-tRNA entities in vivo and helps enforce protein L-homochirality. This chain is D-aminoacyl-tRNA deacylase, found in Opitutus terrae (strain DSM 11246 / JCM 15787 / PB90-1).